The sequence spans 186 residues: Transposon Tn501 resolvase (186 aa).

One can recognise a Resolvase/invertase-type recombinase catalytic domain in the interval 4-137 (HRIGYVRVSS…EGITLAKQRG (134 aa)). Catalysis depends on S12, which acts as the O-(5'-phospho-DNA)-serine intermediate. Residues 17-38 (NPERQLEQTQVSKVFTDKASGK) form a disordered region. Positions 164–183 (KAQLAREFNISRETLYQYLR) form a DNA-binding region, H-T-H motif.

It belongs to the site-specific recombinase resolvase family.

Its function is as follows. Resolvase catalyzes the resolution (a site-specific recombination) of the cointegrated replicon to yield the final transposition products. In Pseudomonas aeruginosa, this protein is Transposon Tn501 resolvase (tnpR).